The chain runs to 80 residues: Protein CEBPZOS (80 aa).

A helical membrane pass occupies residues 15-31 (GVLAAELVGVAGAYCLF).

It is found in the mitochondrion membrane. The polypeptide is Protein CEBPZOS (Mus musculus (Mouse)).